A 257-amino-acid polypeptide reads, in one-letter code: Deoxyribose-phosphate aldolase (257 aa).

The active-site Proton donor/acceptor is the Asp102. Lys166 (schiff-base intermediate with acetaldehyde) is an active-site residue. Lys198 serves as the catalytic Proton donor/acceptor.

This sequence belongs to the DeoC/FbaB aldolase family. DeoC type 2 subfamily.

The protein resides in the cytoplasm. It carries out the reaction 2-deoxy-D-ribose 5-phosphate = D-glyceraldehyde 3-phosphate + acetaldehyde. Its pathway is carbohydrate degradation; 2-deoxy-D-ribose 1-phosphate degradation; D-glyceraldehyde 3-phosphate and acetaldehyde from 2-deoxy-alpha-D-ribose 1-phosphate: step 2/2. In terms of biological role, catalyzes a reversible aldol reaction between acetaldehyde and D-glyceraldehyde 3-phosphate to generate 2-deoxy-D-ribose 5-phosphate. The sequence is that of Deoxyribose-phosphate aldolase from Aeromonas salmonicida (strain A449).